The sequence spans 498 residues: ATP synthase subunit beta, chloroplastic (498 aa).

Position 172–179 (172–179 (GGAGVGKT)) interacts with ATP.

The protein belongs to the ATPase alpha/beta chains family. In terms of assembly, F-type ATPases have 2 components, CF(1) - the catalytic core - and CF(0) - the membrane proton channel. CF(1) has five subunits: alpha(3), beta(3), gamma(1), delta(1), epsilon(1). CF(0) has four main subunits: a(1), b(1), b'(1) and c(9-12).

It localises to the plastid. Its subcellular location is the chloroplast thylakoid membrane. The catalysed reaction is ATP + H2O + 4 H(+)(in) = ADP + phosphate + 5 H(+)(out). In terms of biological role, produces ATP from ADP in the presence of a proton gradient across the membrane. The catalytic sites are hosted primarily by the beta subunits. The chain is ATP synthase subunit beta, chloroplastic from Triticum aestivum (Wheat).